Consider the following 316-residue polypeptide: L-lactate dehydrogenase (316 aa).

Residues Val-15, Asp-36, Arg-41, Tyr-66, and 80-81 each bind NAD(+); that span reads GA. Substrate-binding positions include Gln-83, Arg-90, and 122-125; that span reads NPVD. Residues 120 to 122 and Thr-145 contribute to the NAD(+) site; that span reads ATN. 150 to 153 serves as a coordination point for substrate; it reads DTAR. Residues Arg-155 and His-170 each contribute to the beta-D-fructose 1,6-bisphosphate site. His-177 functions as the Proton acceptor in the catalytic mechanism. Tyr-222 carries the post-translational modification Phosphotyrosine. Thr-231 is a binding site for substrate. A disordered region spans residues 287-316; the sequence is DPGLSDEEREALRDSARALRDSRADLTVGT. The span at 296–310 shows a compositional bias: basic and acidic residues; that stretch reads EALRDSARALRDSRA.

This sequence belongs to the LDH/MDH superfamily. LDH family. Homotetramer.

Its subcellular location is the cytoplasm. The enzyme catalyses (S)-lactate + NAD(+) = pyruvate + NADH + H(+). Its pathway is fermentation; pyruvate fermentation to lactate; (S)-lactate from pyruvate: step 1/1. Allosterically activated by fructose 1,6-bisphosphate (FBP). Its function is as follows. Catalyzes the conversion of lactate to pyruvate. The protein is L-lactate dehydrogenase of Salinibacter ruber (strain DSM 13855 / M31).